Here is a 469-residue protein sequence, read N- to C-terminus: Putative dipeptidase SAR1836 (469 aa).

Histidine 84 is a binding site for Zn(2+). Aspartate 86 is a catalytic residue. Zn(2+) is bound at residue aspartate 115. The active-site Proton acceptor is glutamate 149. Zn(2+)-binding residues include glutamate 150, aspartate 173, and histidine 440.

It belongs to the peptidase M20A family. It depends on Zn(2+) as a cofactor.

The chain is Putative dipeptidase SAR1836 from Staphylococcus aureus (strain MRSA252).